The following is a 342-amino-acid chain: S-adenosylmethionine:tRNA ribosyltransferase-isomerase (342 aa).

Belongs to the QueA family. Monomer.

Its subcellular location is the cytoplasm. The enzyme catalyses 7-aminomethyl-7-carbaguanosine(34) in tRNA + S-adenosyl-L-methionine = epoxyqueuosine(34) in tRNA + adenine + L-methionine + 2 H(+). It functions in the pathway tRNA modification; tRNA-queuosine biosynthesis. Functionally, transfers and isomerizes the ribose moiety from AdoMet to the 7-aminomethyl group of 7-deazaguanine (preQ1-tRNA) to give epoxyqueuosine (oQ-tRNA). The protein is S-adenosylmethionine:tRNA ribosyltransferase-isomerase of Oceanobacillus iheyensis (strain DSM 14371 / CIP 107618 / JCM 11309 / KCTC 3954 / HTE831).